The primary structure comprises 1530 residues: Neurexin-1 (1530 aa).

An N-terminal signal peptide occupies residues 1–30 (MGTALVQHGGCCLLCLSLLLLGCWAELGSG). A Laminin G-like 1 domain is found at 31 to 217 (LEFPGAEGQW…PPNSGGGSPC (187 aa)). At 31-1454 (LEFPGAEGQW…EVIRESSSTT (1424 aa)) the chain is on the extracellular side. Asn125 and Asn190 each carry an N-linked (GlcNAc...) asparagine glycan. Residues 196–219 (PVDGSEVKLDEEPPNSGGGSPCEA) are disordered. Positions 213-255 (GGSPCEAGDEGDGGVCLNGGVCSVVDDQAVCDCSRTGFRGKDC) constitute an EGF-like 1 domain. Cystine bridges form between Cys228/Cys243 and Cys245/Cys255. 2 Laminin G-like domains span residues 299–496 (IATF…AFKC) and 503–695 (DPIT…KPSC). 3 residues coordinate Ca(2+): Asp345, Leu362, and Met430. Cystine bridges form between Cys460-Cys496, Cys666-Cys695, Cys703-Cys714, Cys708-Cys723, and Cys725-Cys735. The EGF-like 2 domain maps to 699–736 (TAKPCLSNPCKNNGMCRDGWNRYVCDCSGTGYLGRSCE). Laminin G-like domains follow at residues 741–914 (VLSY…IDYC) and 928–1103 (DPVT…ERGC). The Ca(2+) site is built by Asp788 and Leu805. Asn813 is a glycosylation site (N-linked (GlcNAc...) asparagine). Arg864 contributes to the Ca(2+) binding site. Disulfide bonds link Cys906/Cys914, Cys1075/Cys1103, Cys1110/Cys1121, Cys1115/Cys1130, and Cys1132/Cys1142. In terms of domain architecture, EGF-like 3 spans 1106–1143 (PSTTCQEDSCSNQGVCLQQWDGFSCDCSMTSFSGPLCN). Residues 1149–1347 (YIFSKGGGQI…DANIAIVGNV (199 aa)) enclose the Laminin G-like 6 domain. Asp1199 and Val1216 together coordinate Ca(2+). Asn1246 is a glycosylation site (N-linked (GlcNAc...) asparagine). Ca(2+)-binding residues include Ile1298 and Asn1300. Residue Ser1408 is glycosylated (O-linked (Xyl...) (heparan sulfate) serine). Positions 1412–1443 (PSDDEDIDPCEPSSGGLANPTRVGGREPYPGS) are disordered. The helical transmembrane segment at 1455–1475 (GMVVGIVAAAALCILILLYAM) threads the bilayer. Over 1476-1530 (YKYRNRDEGSYHVDESRNYISNSAQSNGAVVKEKQPSSAKSANKNKKNKDKEYYV) the chain is Cytoplasmic. Residues 1497 to 1523 (NSAQSNGAVVKEKQPSSAKSANKNKKN) form an interaction with CASK region. Residues 1497–1530 (NSAQSNGAVVKEKQPSSAKSANKNKKNKDKEYYV) form a disordered region.

It belongs to the neurexin family. As to quaternary structure, interacts (via laminin G-like domain 2 and/or laminin G-like domain 6) with NLGN1 forming a heterotetramer, where one NLGN1 dimer interacts with one NRXN1 dimer. Also interacts (via laminin G-like domain 2 and/or laminin G-like domain 6) with NLGN2, NLGN3 and NLGN4L; interactions with NLGN1, NLGN2, NLGN3 and NLGN4L are calcium-dependent. Interacts (via cytoplasmic C-terminal region) with CASK (via the PDZ, SH3 and guanylate kinase-like domains). Interacts (via cytoplasmic C-terminus) with CASKIN1 and APBA1. Interacts (via laminin G-like domain 2) with NXPH1 and NXPH3. Alpha-type isoforms (neurexin-1-alpha) interact (via laminin G-like domain 2 and/or laminin G-like domain 6) with DAG1 (via alpha-dystroglycan chain). Interacts with LRRTM1, LRRTM2, LRRTM3 and LRRTM4. Interacts with SYT13 and SYTL1. Interacts with CBLN1, CBLN2 and, less avidly, with CBLN4. Interacts with CLSTN3. Alpha-type isoforms interact with alpha-latrotoxin from spider venom. O-glycosylated; contains heparan sulfate. Heparan sulfate attachment is required for synapse development by mediating interactions with neuroligins and LRRTM2. In terms of tissue distribution, brain (neuronal synapse).

The protein resides in the presynaptic cell membrane. Functionally, cell surface protein involved in cell-cell-interactions, exocytosis of secretory granules and regulation of signal transmission. Function is isoform-specific. Alpha-type isoforms have a long N-terminus with six laminin G-like domains and play an important role in synaptic signal transmission. Alpha-type isoforms play a role in the regulation of calcium channel activity and Ca(2+)-triggered neurotransmitter release at synapses and at neuromuscular junctions. They play an important role in Ca(2+)-triggered exocytosis of secretory granules in pituitary gland. They may affect their functions at synapses and in endocrine cells via their interactions with proteins from the exocytotic machinery. Likewise, alpha-type isoforms play a role in regulating the activity of postsynaptic NMDA receptors, a subtype of glutamate-gated ion channels. Both alpha-type and beta-type isoforms may play a role in the formation or maintenance of synaptic junctions via their interactions (via the extracellular domains) with neuroligin family members, CBLN1 or CBLN2. In vitro, triggers the de novo formation of presynaptic structures. May be involved in specification of excitatory synapses. Alpha-type isoforms were first identified as receptors for alpha-latrotoxin from spider venom. This is Neurexin-1 (Nrxn1) from Rattus norvegicus (Rat).